The following is a 365-amino-acid chain: Holliday junction branch migration complex subunit RuvB (365 aa).

Residues 1–191 (MSPELGGGYD…FGFTAHMDFY (191 aa)) are large ATPase domain (RuvB-L). ATP-binding positions include Leu30, Arg31, Gly72, Lys75, Thr76, Ser77, 138-140 (EDF), Arg181, Tyr191, and Arg228. Residue Thr76 coordinates Mg(2+). Residues 192-262 (EPAELKQILM…IAHAALAVYD (71 aa)) form a small ATPAse domain (RuvB-S) region. Residues 265-365 (QLGLDRLDRS…QASLFDPEDP (101 aa)) are head domain (RuvB-H). The DNA site is built by Arg320 and Arg325.

This sequence belongs to the RuvB family. In terms of assembly, homohexamer. Forms an RuvA(8)-RuvB(12)-Holliday junction (HJ) complex. HJ DNA is sandwiched between 2 RuvA tetramers; dsDNA enters through RuvA and exits via RuvB. An RuvB hexamer assembles on each DNA strand where it exits the tetramer. Each RuvB hexamer is contacted by two RuvA subunits (via domain III) on 2 adjacent RuvB subunits; this complex drives branch migration. In the full resolvosome a probable DNA-RuvA(4)-RuvB(12)-RuvC(2) complex forms which resolves the HJ.

It localises to the cytoplasm. The catalysed reaction is ATP + H2O = ADP + phosphate + H(+). Functionally, the RuvA-RuvB-RuvC complex processes Holliday junction (HJ) DNA during genetic recombination and DNA repair, while the RuvA-RuvB complex plays an important role in the rescue of blocked DNA replication forks via replication fork reversal (RFR). RuvA specifically binds to HJ cruciform DNA, conferring on it an open structure. The RuvB hexamer acts as an ATP-dependent pump, pulling dsDNA into and through the RuvAB complex. RuvB forms 2 homohexamers on either side of HJ DNA bound by 1 or 2 RuvA tetramers; 4 subunits per hexamer contact DNA at a time. Coordinated motions by a converter formed by DNA-disengaged RuvB subunits stimulates ATP hydrolysis and nucleotide exchange. Immobilization of the converter enables RuvB to convert the ATP-contained energy into a lever motion, pulling 2 nucleotides of DNA out of the RuvA tetramer per ATP hydrolyzed, thus driving DNA branch migration. The RuvB motors rotate together with the DNA substrate, which together with the progressing nucleotide cycle form the mechanistic basis for DNA recombination by continuous HJ branch migration. Branch migration allows RuvC to scan DNA until it finds its consensus sequence, where it cleaves and resolves cruciform DNA. The polypeptide is Holliday junction branch migration complex subunit RuvB (Rhodococcus opacus (strain B4)).